The sequence spans 483 residues: Dual specificity protein kinase CLK1 (483 aa).

Residues 1-49 are disordered; that stretch reads MRHSKRTYCPDWDERDWDYGTWRSSSSHKRKKRSHSSAREQKRCRYDHS. Basic residues predominate over residues 26-36; it reads SSHKRKKRSHS. A Nuclear localization signal motif is present at residues 29–33; that stretch reads KRKKR. A compositionally biased stretch (basic and acidic residues) spans 37-49; the sequence is SAREQKRCRYDHS. Position 61 is a phosphoserine (Ser-61). The segment covering 84-111 has biased composition (low complexity); the sequence is EPGHPYGEPGSRYQMHSSKSSGRSGRSS. The disordered stretch occupies residues 84–146; sequence EPGHPYGEPG…SRSVEDDEEG (63 aa). Over residues 112-137 the composition is skewed to basic residues; sequence YKSKHRSRHHTSQHHSHGKSHRRKRS. The residue at position 139 (Ser-139) is a Phosphoserine. One can recognise a Protein kinase domain in the interval 160 to 476; that stretch reads YEIVDTLGEG…LKEALKHPFF (317 aa). Residues 166–174 and Lys-190 each bind ATP; that span reads LGEGAFGKV. The active-site Proton acceptor is the Asp-287.

The protein belongs to the protein kinase superfamily. CMGC Ser/Thr protein kinase family. Lammer subfamily. As to quaternary structure, interacts with PPIG and UBL5. In terms of processing, autophosphorylates on all three types of residues.

Its subcellular location is the nucleus. It carries out the reaction L-seryl-[protein] + ATP = O-phospho-L-seryl-[protein] + ADP + H(+). The enzyme catalyses L-threonyl-[protein] + ATP = O-phospho-L-threonyl-[protein] + ADP + H(+). It catalyses the reaction L-tyrosyl-[protein] + ATP = O-phospho-L-tyrosyl-[protein] + ADP + H(+). Regulates splicing of its own pre-mRNA according to its kinase activity; increased expression of the catalytically active form influences splicing to generate the catalytically inactive splicing variant lacking the kinase domain. Leucettine L41 inhibits its kinase activity and affects the regulation of alternative splicing mediated by phosphorylation of SR proteins. Dual specificity kinase acting on both serine/threonine and tyrosine-containing substrates. Phosphorylates serine- and arginine-rich (SR) proteins of the spliceosomal complex and may be a constituent of a network of regulatory mechanisms that enable SR proteins to control RNA splicing. Phosphorylates: SRSF1, SRSF3 and PTPN1. Regulates the alternative splicing of tissue factor (F3) pre-mRNA in endothelial cells. This Mus musculus (Mouse) protein is Dual specificity protein kinase CLK1.